Here is a 366-residue protein sequence, read N- to C-terminus: MITLQRTPLFDVYAKYGGKTVDFGGWELPVQFSSIKEEHEAVRTGAGLFDVSHMGEVEVKGVDSLAFLQRVVTNDVSTLKVGGAQYTAMCYENGGTVDDLLIYKRGEEDYLLVINASNIEKDYEWLASHVIGDAKVVNVSSEVAQLAIQGPKAEGILQKVVSEDLKEIKFFKFKNNILVDGIPALVSRTGYTGEDGFEIYCKSEDAAKLWEKLLEVGAEEGLKPCGLGARDTLRFEATLPLYGQELSKDITPIEAGIGFAVKPNKEADFFGKETLKEQKENGASRKLVGIEVIERGIPRTHYPVFIGEEKIGEVTSGTQSPTLKKSIGLALIDVKYAAVDTEVEIEIRNKRVKAVVVPTPFYKRSK.

It belongs to the GcvT family. The glycine cleavage system is composed of four proteins: P, T, L and H.

It carries out the reaction N(6)-[(R)-S(8)-aminomethyldihydrolipoyl]-L-lysyl-[protein] + (6S)-5,6,7,8-tetrahydrofolate = N(6)-[(R)-dihydrolipoyl]-L-lysyl-[protein] + (6R)-5,10-methylene-5,6,7,8-tetrahydrofolate + NH4(+). Functionally, the glycine cleavage system catalyzes the degradation of glycine. The sequence is that of Aminomethyltransferase from Bacillus mycoides (strain KBAB4) (Bacillus weihenstephanensis).